Reading from the N-terminus, the 353-residue chain is Phospho-N-acetylmuramoyl-pentapeptide-transferase (353 aa).

The next 10 helical transmembrane spans lie at 24-44 (LGFF…ILWA), 66-86 (TPTM…LLCA), 88-108 (LGNP…FVGF), 129-149 (FGML…KGLD), 160-180 (PLFE…FLSA), 192-212 (GLAS…VYVA), 229-249 (VGEL…FLWY), 256-276 (VFMG…NAIV), 281-301 (ILLV…ILQV), and 330-350 (KVIV…LLSL).

Belongs to the glycosyltransferase 4 family. MraY subfamily. Mg(2+) serves as cofactor.

It localises to the cell inner membrane. The enzyme catalyses UDP-N-acetyl-alpha-D-muramoyl-L-alanyl-gamma-D-glutamyl-meso-2,6-diaminopimeloyl-D-alanyl-D-alanine + di-trans,octa-cis-undecaprenyl phosphate = di-trans,octa-cis-undecaprenyl diphospho-N-acetyl-alpha-D-muramoyl-L-alanyl-D-glutamyl-meso-2,6-diaminopimeloyl-D-alanyl-D-alanine + UMP. It functions in the pathway cell wall biogenesis; peptidoglycan biosynthesis. Catalyzes the initial step of the lipid cycle reactions in the biosynthesis of the cell wall peptidoglycan: transfers peptidoglycan precursor phospho-MurNAc-pentapeptide from UDP-MurNAc-pentapeptide onto the lipid carrier undecaprenyl phosphate, yielding undecaprenyl-pyrophosphoryl-MurNAc-pentapeptide, known as lipid I. The chain is Phospho-N-acetylmuramoyl-pentapeptide-transferase from Helicobacter acinonychis (strain Sheeba).